The following is a 224-amino-acid chain: 25 kDa integral membrane protein (224 aa).

Residues 1-12 (MKLSFTKVSLTN) are Cytoplasmic-facing. A helical transmembrane segment spans residues 13 to 33 (ILILFNCLFIIFSMIVLTFGV). Over 34 to 52 (IPQIYLLKFANILHGVRPS) the chain is Extracellular. A helical transmembrane segment spans residues 53 to 73 (IFPIVCFTGSFVIIVACVGII). The Cytoplasmic segment spans residues 74 to 80 (GLMKGGK). The helical transmembrane segment at 81-101 (CLLTMHIIALIIATIIDISTA) threads the bilayer. The Extracellular segment spans residues 102-189 (TLSAIKQNEF…LNKYVRYYID (88 aa)). An N-linked (GlcNAc...) asparagine glycan is attached at Asn120. Residues 190-210 (ILIYLCFIFGFIKLIYSLFTF) form a helical membrane-spanning segment. Topologically, residues 211–224 (TQRQRIFSEKTPVA) are cytoplasmic.

This sequence belongs to the tetraspanin (TM4SF) family.

It localises to the membrane. The protein is 25 kDa integral membrane protein of Schistosoma japonicum (Blood fluke).